A 343-amino-acid polypeptide reads, in one-letter code: Ribosomal RNA small subunit methyltransferase C (343 aa).

This sequence belongs to the methyltransferase superfamily. RsmC family. As to quaternary structure, monomer.

It is found in the cytoplasm. The enzyme catalyses guanosine(1207) in 16S rRNA + S-adenosyl-L-methionine = N(2)-methylguanosine(1207) in 16S rRNA + S-adenosyl-L-homocysteine + H(+). Functionally, specifically methylates the guanine in position 1207 of 16S rRNA in the 30S particle. The sequence is that of Ribosomal RNA small subunit methyltransferase C from Escherichia coli O157:H7.